A 48-amino-acid chain; its full sequence is uncharacterized protein (48 aa).

It belongs to the ELIP/psbS family.

The protein localises to the plastid. The protein resides in the chloroplast. Functionally, possible role in chlorophyll and/or carotenoid binding. This is an uncharacterized protein from Porphyra purpurea (Red seaweed).